A 169-amino-acid chain; its full sequence is Endoribonuclease YbeY (169 aa).

3 residues coordinate Zn(2+): His-128, His-132, and His-138.

Belongs to the endoribonuclease YbeY family. Zn(2+) is required as a cofactor.

It is found in the cytoplasm. In terms of biological role, single strand-specific metallo-endoribonuclease involved in late-stage 70S ribosome quality control and in maturation of the 3' terminus of the 16S rRNA. This chain is Endoribonuclease YbeY, found in Rhizorhabdus wittichii (strain DSM 6014 / CCUG 31198 / JCM 15750 / NBRC 105917 / EY 4224 / RW1) (Sphingomonas wittichii).